Here is a 402-residue protein sequence, read N- to C-terminus: Beta sliding clamp (402 aa).

It belongs to the beta sliding clamp family. As to quaternary structure, forms a ring-shaped head-to-tail homodimer around DNA which binds and tethers DNA polymerases and other proteins to the DNA. The DNA replisome complex has a single clamp-loading complex (3 tau and 1 each of delta, delta', psi and chi subunits) which binds 3 Pol III cores (1 core on the leading strand and 2 on the lagging strand) each with a beta sliding clamp dimer. Additional proteins in the replisome are other copies of gamma, psi and chi, Ssb, DNA helicase and RNA primase.

It localises to the cytoplasm. Its function is as follows. Confers DNA tethering and processivity to DNA polymerases and other proteins. Acts as a clamp, forming a ring around DNA (a reaction catalyzed by the clamp-loading complex) which diffuses in an ATP-independent manner freely and bidirectionally along dsDNA. Initially characterized for its ability to contact the catalytic subunit of DNA polymerase III (Pol III), a complex, multichain enzyme responsible for most of the replicative synthesis in bacteria; Pol III exhibits 3'-5' exonuclease proofreading activity. The beta chain is required for initiation of replication as well as for processivity of DNA replication. This chain is Beta sliding clamp (dnaN), found in Mycobacterium bovis (strain ATCC BAA-935 / AF2122/97).